The primary structure comprises 403 residues: Synaptotagmin-7 (403 aa).

The Vesicular portion of the chain corresponds to 1–16 (MYRDPEAASPGAPTRD). A helical transmembrane segment spans residues 17–37 (VLLVSAIITVSLSVTIVLCGL). Topologically, residues 38-403 (CHWCQRKLGK…PVAQWHQLKA (366 aa)) are cytoplasmic. Ser-52 carries the phosphoserine modification. The interval 53–103 (LETVGTPDSGRGRGEKKAIKLPAGGKAVNTAPVPGQTPHDESDRRTETRSS) is disordered. Thr-58 is subject to Phosphothreonine. Phosphoserine is present on Ser-61. The span at 90–100 (PHDESDRRTET) shows a compositional bias: basic and acidic residues. 2 positions are modified to phosphoserine: Ser-119 and Ser-122. C2 domains are found at residues 135–255 (NLGR…TFWK) and 266–399 (SRGE…AQWH). Asp-166 contributes to the Ca(2+) binding site. Asymmetric dimethylarginine occurs at positions 169 and 171. Residues Asp-172, Asp-225, Asp-227, Ser-230, Asp-233, Asp-297, Asp-303, Asp-357, Asp-359, Ser-362, and Asp-365 each coordinate Ca(2+).

This sequence belongs to the synaptotagmin family. As to quaternary structure, homodimer. Can also form heterodimers with SYT6, SYT9 and SYT10. Interacts with calmodulin (CALM1, CALM2 or CALM3). Interacts with CD63; required for localization to lysosomes. Interacts with APP. It depends on Ca(2+) as a cofactor. Palmitoylated at its vesicular N-terminus; palmitoylation is required for localization to lysosome and phagocytosis in macrophages. Widely expressed. Expressed in insulin-secreting cells. Present in glucagon-secreting cells (at protein level).

It localises to the cell membrane. The protein localises to the presynaptic cell membrane. Its subcellular location is the cytoplasmic vesicle. The protein resides in the secretory vesicle. It is found in the synaptic vesicle membrane. It localises to the lysosome membrane. The protein localises to the phagosome membrane. Its subcellular location is the peroxisome membrane. The protein resides in the secretory vesicle membrane. Its function is as follows. Ca(2+) sensor involved in Ca(2+)-dependent exocytosis of secretory and synaptic vesicles through Ca(2+) and phospholipid binding to the C2 domain. Ca(2+) induces binding of the C2-domains to phospholipid membranes and to assembled SNARE-complexes; both actions contribute to triggering exocytosis. SYT7 binds Ca(2+) with high affinity and slow kinetics compared to other synaptotagmins. Involved in Ca(2+)-triggered lysosomal exocytosis, a major component of the plasma membrane repair. Ca(2+)-regulated delivery of lysosomal membranes to the cell surface is also involved in the phagocytic uptake of particles by macrophages. Ca(2+)-triggered lysosomal exocytosis also plays a role in bone remodeling by regulating secretory pathways in osteoclasts and osteoblasts. Involved in cholesterol transport from lysosome to peroxisome by promoting membrane contacts between lysosomes and peroxisomes: probably acts by promoting vesicle fusion by binding phosphatidylinositol-4,5-bisphosphate on peroxisomal membranes. Acts as a key mediator of synaptic facilitation, a process also named short-term synaptic potentiation: synaptic facilitation takes place at synapses with a low initial release probability and is caused by influx of Ca(2+) into the axon terminal after spike generation, increasing the release probability of neurotransmitters. Probably mediates synaptic facilitation by directly increasing the probability of release. May also contribute to synaptic facilitation by regulating synaptic vesicle replenishment, a process required to ensure that synaptic vesicles are ready for the arrival of the next action potential: SYT7 is required for synaptic vesicle replenishment by acting as a sensor for Ca(2+) and by forming a complex with calmodulin. Also acts as a regulator of Ca(2+)-dependent insulin and glucagon secretion in beta-cells. Triggers exocytosis by promoting fusion pore opening and fusion pore expansion in chromaffin cells. Also regulates the secretion of some non-synaptic secretory granules of specialized cells. The polypeptide is Synaptotagmin-7 (Mus musculus (Mouse)).